We begin with the raw amino-acid sequence, 234 residues long: Lipoprotein-releasing system ATP-binding protein LolD 1 (234 aa).

One can recognise an ABC transporter domain in the interval 5–231; the sequence is IEARGIEKVF…RLTSNVRDPG (227 aa). 41-48 lines the ATP pocket; sequence GASGSGKS.

The protein belongs to the ABC transporter superfamily. Lipoprotein translocase (TC 3.A.1.125) family. As to quaternary structure, the complex is composed of two ATP-binding proteins (LolD) and two transmembrane proteins (LolC and LolE).

Its subcellular location is the cell inner membrane. Part of the ABC transporter complex LolCDE involved in the translocation of mature outer membrane-directed lipoproteins, from the inner membrane to the periplasmic chaperone, LolA. Responsible for the formation of the LolA-lipoprotein complex in an ATP-dependent manner. The polypeptide is Lipoprotein-releasing system ATP-binding protein LolD 1 (Caulobacter vibrioides (strain ATCC 19089 / CIP 103742 / CB 15) (Caulobacter crescentus)).